The primary structure comprises 98 residues: Class II hydrophobin 2 (98 aa).

Residues 1 to 21 (MFFSRISTIVSMTALFASALA) form the signal peptide. 4 disulfides stabilise this stretch: Cys-34-Cys-80, Cys-41-Cys-71, Cys-42-Cys-54, and Cys-81-Cys-92.

It belongs to the cerato-ulmin hydrophobin family.

The protein resides in the secreted. The protein localises to the cell wall. In terms of biological role, aerial growth, conidiation, and dispersal of filamentous fungi in the environment rely upon a capability of their secreting small amphipathic proteins called hydrophobins (HPBs) with low sequence identity. Class I can self-assemble into an outermost layer of rodlet bundles on aerial cell surfaces, conferring cellular hydrophobicity that supports fungal growth, development and dispersal; whereas Class II form highly ordered films at water-air interfaces through intermolecular interactions but contribute nothing to the rodlet structure. In Botryotinia fuckeliana, hydrophobins are not involved in conferring surface hydrophobicity to conidia and aerial hyphae and their function in sclerotia and fruiting bodies remains to be investigated. This is Class II hydrophobin 2 from Botryotinia fuckeliana (strain B05.10) (Noble rot fungus).